The following is a 180-amino-acid chain: Guanosine-3',5'-bis(diphosphate) 3'-pyrophosphohydrolase MESH1 (180 aa).

One can recognise an HD domain in the interval 33 to 128 (YINHPIGVAR…VKLADKLYNL (96 aa)). Residues His-36, His-62, and Asp-63 each contribute to the Mn(2+) site. Catalysis depends on nucleophile residues Glu-66 and Asp-67. Asp-123 contacts Mn(2+).

The protein belongs to the MESH1 family. Mn(2+) is required as a cofactor.

The enzyme catalyses guanosine 3',5'-bis(diphosphate) + H2O = GDP + diphosphate + H(+). Its function is as follows. ppGpp hydrolyzing enzyme involved in starvation response. This is Guanosine-3',5'-bis(diphosphate) 3'-pyrophosphohydrolase MESH1 (hddc3) from Danio rerio (Zebrafish).